Consider the following 190-residue polypeptide: Elongation factor P (190 aa).

N6-(3,6-diaminohexanoyl)-5-hydroxylysine is present on Lys34.

Belongs to the elongation factor P family. Post-translationally, may be beta-lysylated on the epsilon-amino group of Lys-34 by the combined action of EpmA and EpmB, and then hydroxylated on the C5 position of the same residue by EpmC (if this protein is present). Lysylation is critical for the stimulatory effect of EF-P on peptide-bond formation. The lysylation moiety may extend toward the peptidyltransferase center and stabilize the terminal 3-CCA end of the tRNA. Hydroxylation of the C5 position on Lys-34 may allow additional potential stabilizing hydrogen-bond interactions with the P-tRNA.

It is found in the cytoplasm. Its pathway is protein biosynthesis; polypeptide chain elongation. Its function is as follows. Involved in peptide bond synthesis. Alleviates ribosome stalling that occurs when 3 or more consecutive Pro residues or the sequence PPG is present in a protein, possibly by augmenting the peptidyl transferase activity of the ribosome. Modification of Lys-34 is required for alleviation. The chain is Elongation factor P from Psychrobacter arcticus (strain DSM 17307 / VKM B-2377 / 273-4).